Consider the following 467-residue polypeptide: Dimethylamine methyltransferase MtbB2 (467 aa).

Residue Pyl356 is a non-standard amino acid, pyrrolysine.

This sequence belongs to the dimethylamine methyltransferase family.

It catalyses the reaction Co(I)-[dimethylamine-specific corrinoid protein] + dimethylamine + H(+) = methyl-Co(III)-[dimethylamine-specific corrinoid protein] + methylamine. The protein operates within one-carbon metabolism; methanogenesis from dimethylamine. Functionally, catalyzes the transfer of a methyl group from dimethylamine to the corrinoid cofactor of MtbC. The protein is Dimethylamine methyltransferase MtbB2 (mtbB2) of Methanosarcina barkeri (strain Fusaro / DSM 804).